The primary structure comprises 263 residues: Undecaprenyl-diphosphatase (263 aa).

A run of 8 helical transmembrane segments spans residues 1–21 (MSYLHAIILGIVEGITEFLPI), 41–61 (FTKAFEVIIQFGAIMSVLVLY), 69–89 (WGFYRKLFVAFLPTAIIGFVV), 96–116 (LMGSVQVVAWSLIIGGVILIW), 147–167 (AIAMIPGVSRSGATIMGGLTL), 177–197 (FSFFLAVPTMAAATLYKLLKI), 208–228 (LLLVGCAVAFVVAMIAIKFFI), and 238–258 (GFGYYRIVLGLVILILLYTGH).

Belongs to the UppP family.

It is found in the cell inner membrane. It carries out the reaction di-trans,octa-cis-undecaprenyl diphosphate + H2O = di-trans,octa-cis-undecaprenyl phosphate + phosphate + H(+). In terms of biological role, catalyzes the dephosphorylation of undecaprenyl diphosphate (UPP). Confers resistance to bacitracin. The sequence is that of Undecaprenyl-diphosphatase from Bdellovibrio bacteriovorus (strain ATCC 15356 / DSM 50701 / NCIMB 9529 / HD100).